The primary structure comprises 305 residues: Mycothiol acetyltransferase (305 aa).

N-acetyltransferase domains follow at residues 10–154 (DRLD…VVLE) and 156–305 (ISLR…YARA). E38 lines the 1D-myo-inositol 2-(L-cysteinylamino)-2-deoxy-alpha-D-glucopyranoside pocket. 82–84 (LAV) provides a ligand contact to acetyl-CoA. 1D-myo-inositol 2-(L-cysteinylamino)-2-deoxy-alpha-D-glucopyranoside is bound by residues E183, K225, and E238. Acetyl-CoA is bound by residues 242–244 (VAI) and 249–255 (QGRGLGR). Y276 provides a ligand contact to 1D-myo-inositol 2-(L-cysteinylamino)-2-deoxy-alpha-D-glucopyranoside. 281 to 286 (NASALH) is a binding site for acetyl-CoA.

The protein belongs to the acetyltransferase family. MshD subfamily. As to quaternary structure, monomer.

The enzyme catalyses 1D-myo-inositol 2-(L-cysteinylamino)-2-deoxy-alpha-D-glucopyranoside + acetyl-CoA = mycothiol + CoA + H(+). In terms of biological role, catalyzes the transfer of acetyl from acetyl-CoA to desacetylmycothiol (Cys-GlcN-Ins) to form mycothiol. The sequence is that of Mycothiol acetyltransferase from Rhodococcus opacus (strain B4).